Consider the following 498-residue polypeptide: Lysine--tRNA ligase (498 aa).

Residues glutamate 408 and glutamate 415 each contribute to the Mg(2+) site.

It belongs to the class-II aminoacyl-tRNA synthetase family. In terms of assembly, homodimer. It depends on Mg(2+) as a cofactor.

The protein resides in the cytoplasm. It catalyses the reaction tRNA(Lys) + L-lysine + ATP = L-lysyl-tRNA(Lys) + AMP + diphosphate. The sequence is that of Lysine--tRNA ligase from Listeria innocua serovar 6a (strain ATCC BAA-680 / CLIP 11262).